A 98-amino-acid chain; its full sequence is NADH-ubiquinone oxidoreductase chain 4L (98 aa).

Helical transmembrane passes span 1–21, 29–49, and 61–81; these read MSIV…GMLI, SLLC…LIIL, and IILL…LVMV.

It belongs to the complex I subunit 4L family. As to quaternary structure, core subunit of respiratory chain NADH dehydrogenase (Complex I) which is composed of 45 different subunits.

The protein resides in the mitochondrion inner membrane. It carries out the reaction a ubiquinone + NADH + 5 H(+)(in) = a ubiquinol + NAD(+) + 4 H(+)(out). Its function is as follows. Core subunit of the mitochondrial membrane respiratory chain NADH dehydrogenase (Complex I) which catalyzes electron transfer from NADH through the respiratory chain, using ubiquinone as an electron acceptor. Part of the enzyme membrane arm which is embedded in the lipid bilayer and involved in proton translocation. The chain is NADH-ubiquinone oxidoreductase chain 4L (MT-ND4L) from Herpestes javanicus (Small Indian mongoose).